The following is a 249-amino-acid chain: Probable transcriptional regulatory protein Psyc_0938 (249 aa).

Belongs to the TACO1 family.

The protein resides in the cytoplasm. The protein is Probable transcriptional regulatory protein Psyc_0938 of Psychrobacter arcticus (strain DSM 17307 / VKM B-2377 / 273-4).